The sequence spans 258 residues: SMH class II histocompatibility antigen, beta-1 chain (258 aa).

The signal sequence occupies residues 1 to 29 (MMVLPVPVAPWTAALTVLLMVLNKSVVQG). The beta-1 stretch occupies residues 30 to 121 (RTTPENYLFR…LNQRLSQSLI (92 aa)). Residues 30 to 225 (RTTPENYLFR…RAQSDSARNK (196 aa)) lie on the Extracellular side of the membrane. 2 disulfide bridges follow: Cys44/Cys106 and Cys144/Cys200. Residues 122–215 (AQPKVHVSPS…SLDRPITVEW (94 aa)) are beta-2. Positions 124 to 212 (PKVHVSPSKG…EHPSLDRPIT (89 aa)) constitute an Ig-like C1-type domain. The connecting peptide stretch occupies residues 216-225 (RAQSDSARNK). Residue Asn224 is glycosylated (N-linked (GlcNAc...) asparagine). Residues 226–246 (TLTGVGGLVLGLIFLAVGLIM) form a helical membrane-spanning segment. Topologically, residues 247–258 (HVRSKKAQRGSR) are cytoplasmic.

This sequence belongs to the MHC class II family.

Its subcellular location is the membrane. The polypeptide is SMH class II histocompatibility antigen, beta-1 chain (Spalax ehrenbergi (Middle East blind mole rat)).